A 514-amino-acid polypeptide reads, in one-letter code: Leucine-rich repeat-containing protein 14B (514 aa).

One copy of the LRR 1; degenerate repeat lies at R104–T141. The stretch at R185–G209 is one LRR 2; degenerate repeat. The stretch at F238–K277 is one LRR 4; degenerate repeat. LRR repeat units lie at residues M278–L302, Q303–E334, V335–T350, S359–P386, and C387–A411.

This sequence belongs to the PRAME family. LRRC14 subfamily.

This chain is Leucine-rich repeat-containing protein 14B, found in Homo sapiens (Human).